The primary structure comprises 97 residues: Type 1 phosphatases regulator YPI2 (97 aa).

Residues 1–97 (MNKKKTKICC…KMMEKKSNNT (97 aa)) are disordered. Residues 43-53 (ENDKDLGFDER) show a composition bias toward basic and acidic residues. Over residues 54–65 (RKRRVERRRRKL) the composition is skewed to basic residues.

The protein belongs to the YPI1 family.

The protein resides in the nucleus. Regulator of type 1 phosphatases which maintains protein phosphatase activity under strict control. This chain is Type 1 phosphatases regulator YPI2 (YPI2), found in Vanderwaltozyma polyspora (strain ATCC 22028 / DSM 70294 / BCRC 21397 / CBS 2163 / NBRC 10782 / NRRL Y-8283 / UCD 57-17) (Kluyveromyces polysporus).